A 132-amino-acid chain; its full sequence is Small ribosomal subunit protein uS9 (132 aa).

Belongs to the universal ribosomal protein uS9 family.

The sequence is that of Small ribosomal subunit protein uS9 (rps9) from Halobacterium salinarum (strain ATCC 700922 / JCM 11081 / NRC-1) (Halobacterium halobium).